The sequence spans 377 residues: Homoserine O-succinyltransferase (377 aa).

Positions 50 to 359 constitute an AB hydrolase-1 domain; it reads NAVLVCHALS…SSHGHDSFLM (310 aa). S156 acts as the Nucleophile in catalysis. R226 serves as a coordination point for substrate. Active-site residues include D321 and H354. A substrate-binding site is contributed by D355.

It belongs to the AB hydrolase superfamily. MetX family. Homodimer.

Its subcellular location is the cytoplasm. It catalyses the reaction L-homoserine + succinyl-CoA = O-succinyl-L-homoserine + CoA. It functions in the pathway amino-acid biosynthesis; L-methionine biosynthesis via de novo pathway; O-succinyl-L-homoserine from L-homoserine: step 1/1. Its function is as follows. Transfers a succinyl group from succinyl-CoA to L-homoserine, forming succinyl-L-homoserine. The sequence is that of Homoserine O-succinyltransferase from Nitrosospira multiformis (strain ATCC 25196 / NCIMB 11849 / C 71).